We begin with the raw amino-acid sequence, 260 residues long: Phosphoribosylaminoimidazole-succinocarboxamide synthase (260 aa).

The protein belongs to the SAICAR synthetase family.

The catalysed reaction is 5-amino-1-(5-phospho-D-ribosyl)imidazole-4-carboxylate + L-aspartate + ATP = (2S)-2-[5-amino-1-(5-phospho-beta-D-ribosyl)imidazole-4-carboxamido]succinate + ADP + phosphate + 2 H(+). Its pathway is purine metabolism; IMP biosynthesis via de novo pathway; 5-amino-1-(5-phospho-D-ribosyl)imidazole-4-carboxamide from 5-amino-1-(5-phospho-D-ribosyl)imidazole-4-carboxylate: step 1/2. This chain is Phosphoribosylaminoimidazole-succinocarboxamide synthase, found in Pelagibacter ubique (strain HTCC1062).